We begin with the raw amino-acid sequence, 319 residues long: Ribose-phosphate pyrophosphokinase (319 aa).

ATP-binding positions include 40–42 (DGE) and 99–100 (RQ). Residues His134 and Asp174 each coordinate Mg(2+). The active site involves Lys198. Residues Arg200, Asp224, and 228 to 232 (DTAGT) each bind D-ribose 5-phosphate.

Belongs to the ribose-phosphate pyrophosphokinase family. Class I subfamily. In terms of assembly, homohexamer. Mg(2+) serves as cofactor.

The protein resides in the cytoplasm. It catalyses the reaction D-ribose 5-phosphate + ATP = 5-phospho-alpha-D-ribose 1-diphosphate + AMP + H(+). It participates in metabolic intermediate biosynthesis; 5-phospho-alpha-D-ribose 1-diphosphate biosynthesis; 5-phospho-alpha-D-ribose 1-diphosphate from D-ribose 5-phosphate (route I): step 1/1. Its function is as follows. Involved in the biosynthesis of the central metabolite phospho-alpha-D-ribosyl-1-pyrophosphate (PRPP) via the transfer of pyrophosphoryl group from ATP to 1-hydroxyl of ribose-5-phosphate (Rib-5-P). The chain is Ribose-phosphate pyrophosphokinase from Xanthomonas axonopodis pv. citri (strain 306).